A 271-amino-acid chain; its full sequence is Putative mitochondrial carrier protein PET8 (271 aa).

Solcar repeat units lie at residues 3–76 (STFL…MKQQ), 91–177 (AEVL…LKKK), and 187–270 (VSAW…VHSL). 6 helical membrane-spanning segments follow: residues 6–26 (LASLVSGAAAGTSTDVVFFPI), 51–71 (GLGSAVVASAPGASLFFVTYD), 97–117 (MLSSSLGEMSACLVRVPAEVI), 152–168 (GWWTTIMREIPFTCIQF), 193–213 (AVCGSLAGGIAAAATTPLDVL), and 251–271 (MWISAGGAIFLGVYEAVHSLF).

This sequence belongs to the mitochondrial carrier (TC 2.A.29) family.

It localises to the mitochondrion inner membrane. The protein is Putative mitochondrial carrier protein PET8 (PET8) of Eremothecium gossypii (strain ATCC 10895 / CBS 109.51 / FGSC 9923 / NRRL Y-1056) (Yeast).